Reading from the N-terminus, the 141-residue chain is 3-hydroxyacyl-[acyl-carrier-protein] dehydratase FabZ (141 aa).

Residue histidine 48 is part of the active site.

Belongs to the thioester dehydratase family. FabZ subfamily.

It is found in the cytoplasm. It carries out the reaction a (3R)-hydroxyacyl-[ACP] = a (2E)-enoyl-[ACP] + H2O. Its function is as follows. Involved in unsaturated fatty acids biosynthesis. Catalyzes the dehydration of short chain beta-hydroxyacyl-ACPs and long chain saturated and unsaturated beta-hydroxyacyl-ACPs. The chain is 3-hydroxyacyl-[acyl-carrier-protein] dehydratase FabZ from Bacillus subtilis (strain 168).